Reading from the N-terminus, the 366-residue chain is Mannonate dehydratase (366 aa).

This sequence belongs to the mannonate dehydratase family. Fe(2+) serves as cofactor. The cofactor is Mn(2+).

It catalyses the reaction D-mannonate = 2-dehydro-3-deoxy-D-gluconate + H2O. Its pathway is carbohydrate metabolism; pentose and glucuronate interconversion. Catalyzes the dehydration of D-mannonate. This is Mannonate dehydratase from Streptococcus suis (strain 98HAH33).